The sequence spans 155 residues: Small ribosomal subunit protein uS7 (155 aa).

This sequence belongs to the universal ribosomal protein uS7 family. Part of the 30S ribosomal subunit. Contacts proteins S9 and S11.

Its function is as follows. One of the primary rRNA binding proteins, it binds directly to 16S rRNA where it nucleates assembly of the head domain of the 30S subunit. Is located at the subunit interface close to the decoding center, probably blocks exit of the E-site tRNA. The chain is Small ribosomal subunit protein uS7 from Sulfurimonas denitrificans (strain ATCC 33889 / DSM 1251) (Thiomicrospira denitrificans (strain ATCC 33889 / DSM 1251)).